Consider the following 458-residue polypeptide: Carboxypeptidase N catalytic chain (458 aa).

An N-terminal signal peptide occupies residues M1–P20. Residues R24–V338 enclose the Peptidase M14 domain. C42 and C104 are oxidised to a cystine. Positions 86, 89, and 216 each coordinate Zn(2+). An intrachain disulfide couples C271 to C311. E308 acts as the Proton donor/acceptor in catalysis. O-linked (GalNAc...) threonine glycans are attached at residues T400, T402, and T409. Positions S423–A458 are disordered.

This sequence belongs to the peptidase M14 family. In terms of assembly, tetramer of two catalytic chains and two glycosylated inactive chains. It depends on Zn(2+) as a cofactor. In terms of tissue distribution, synthesized in the liver and secreted in plasma.

It is found in the secreted. It localises to the extracellular space. It catalyses the reaction Release of a C-terminal basic amino acid, preferentially lysine.. Its function is as follows. Protects the body from potent vasoactive and inflammatory peptides containing C-terminal Arg or Lys (such as kinins or anaphylatoxins) which are released into the circulation. The chain is Carboxypeptidase N catalytic chain (CPN1) from Homo sapiens (Human).